The chain runs to 671 residues: Zinc finger and BTB domain-containing protein 16-A (671 aa).

Residues 34–96 (CDVVIMVDSQ…AYTATLQAKV (63 aa)) enclose the BTB domain. 2 disordered regions span residues 130–167 (ENDTEVNMNDGGTEDDEERKGRHGRNLVGSKKHSTEES) and 248–289 (VDES…RSSV). Positions 270–279 (RSGEPDKNRD) are enriched in basic and acidic residues. Thr283 carries the phosphothreonine modification. C2H2-type zinc fingers lie at residues 401–423 (ERCNVCGAELPDNEAIEQHRKLH), 429–451 (YGCELCGKRFLDSLRLRMHLLSH), 458–480 (IVCDQCGAQFQKEDALEAHRQIH), 487–509 (IFCLLCGKRFQTQTALQQHMEVH), 515–537 (YICSECNRTFPSHTALKRHLRSH), 544–566 (FECEFCGSCFRDESTLKGHKRIH), 572–594 (YECNGCGKKFSLKHQLETHYRVH), 600–622 (FECKLCHQRSRDYSAMIKHLRTH), and 628–650 (YQCTICLEYCPSLSAMQKHMKGH).

This sequence belongs to the krueppel C2H2-type zinc-finger protein family. In terms of assembly, interacts with btbd6a (via BTB domain). Polyubiquitinated, leading to its proteasomal degradation. In terms of tissue distribution, during early stages of primary neurogenesis, expressed in the neural epithelium, with highest levels in the forebrain and midbrain. Also expressed in a posterior-to-anterior gradient in the caudal neural plate at the 3-6 somite stage.

The protein localises to the nucleus. It is found in the cytoplasm. It functions in the pathway protein modification; protein ubiquitination. In terms of biological role, probable transcription factor. Probable substrate-recognition component of an E3 ubiquitin-protein ligase complex which mediates the ubiquitination and subsequent proteasomal degradation of target proteins. Inhibits neurogenesis. The sequence is that of Zinc finger and BTB domain-containing protein 16-A from Danio rerio (Zebrafish).